The chain runs to 610 residues: Prolactin receptor (610 aa).

Residues 1–19 (MPSALAFVLLVLNISLLKG) form the signal peptide. Residues 20 to 229 (QSPPGKPEIH…EMPNDFTLKD (210 aa)) lie on the Extracellular side of the membrane. 2 Fibronectin type-III domains span residues 22–122 (PPGK…IVEP) and 124–224 (PPRN…MPND). Cysteine 31 and cysteine 41 are joined by a disulfide. An N-linked (GlcNAc...) asparagine glycan is attached at asparagine 54. A disulfide bridge connects residues cysteine 70 and cysteine 81. Residues asparagine 99 and asparagine 127 are each glycosylated (N-linked (GlcNAc...) asparagine). Residues aspartate 206 and histidine 207 each coordinate Zn(2+). Positions 210–214 (WSRWS) match the WSXWS motif motif. Residues 230–253 (TTVWIIVAILSAVICLIMVWAVAL) traverse the membrane as a helical segment. At 254 to 610 (KGYSMMTCIF…DPTCFMHSFH (357 aa)) the chain is on the cytoplasmic side. Positions 262 to 270 (IFPPVPGPK) match the Box 1 motif motif. Disordered regions lie at residues 317–355 (DERL…HSLL), 458–482 (TGEE…TPWP), and 564–584 (AKKA…ASFT). A compositionally biased stretch (basic and acidic residues) spans 318–327 (ERLMPSHSKE). Positions 345–354 (GHGSYDSHSL) are enriched in low complexity.

Belongs to the type I cytokine receptor family. Type 1 subfamily. In terms of assembly, interacts with SMARCA1. Interacts with NEK3 and VAV2 and this interaction is prolactin-dependent.

Its subcellular location is the membrane. In terms of biological role, this is a receptor for the anterior pituitary hormone prolactin. This is Prolactin receptor (Prlr) from Rattus norvegicus (Rat).